We begin with the raw amino-acid sequence, 45 residues long: Large ribosomal subunit protein bL34 (45 aa).

Belongs to the bacterial ribosomal protein bL34 family.

This Prochlorococcus marinus (strain MIT 9313) protein is Large ribosomal subunit protein bL34.